The sequence spans 1336 residues: MVSRSSETSEGPPPPSKIPGTPAKTRLSRLNSSPAKQDKPKDDRVVKSSAKDVAELKDYQLGDCLGKGAFGSVYRALNWNTGETVAVKQIKLVDLPKSELRVIMLEIDLLKNLDHPNIVKYQGFVKSAETLNIILEYCENGSLHSIAKNFGRFPENLVGLYMSQVLHGLLYLHEQGVIHRDIKGANILTTKEGLVKLADFGVASRTTGLSESSVVGTPYWMAPEVIELSGATTASDIWSLGCTVIELLEGKPPYYNLQPMPALFRIVNDDHPPLPQGASPAVKDFLMQCFQKDPNLRVSARKLLKHPWIVNARRSDSVVPKKSTEYEEAVKSVQEWNEALRSPDTGTLRKPYRYDAQGAALRPEMAPSRYTPTKDILPSPVSKHVTDRFRSPDSTEEDNWDDDFATAISPSALQLPHLRPQDNFGGMLSSEKLKAFASLDGTVLKSEDGFDDFDDPFSQQPGESDPLRTIRPYSAKPTGMENMSQQTKPTIAAMHHNVPVLKTPVPPLRPQRPTSYFKENSVEDYSDLISANEDILDDKLSAFQDIDEEGSDISIPSPSKEVVRYQASPDHDEDHQPQLRKRISVKRHRSAIEIQKFAENERDEDFSDILGADEVALDKPESDEGSDRSTLMLNSKLSNNSWLGDQDDEDDPFAQLEEGLDEVDLEANIARDKYARLRGQVEGLVSSLKTSQDEDVLGEISEQLLTVFCDLPETKNIIISAHGMLPILEILDICRRRDIILCLLRIVNAIIFNDYEIQENLCFVGGIPIINEFASKKYPREIRLEAAAFVQQMYQTSTLTLQMFVSAGGLNVLVEFLEDDYEDERDLVLIGVNGIWSVFDLQGSTPKNDFCRILSRNSVLDPLSLVLSRVLDEEGELAEIVEGRIANIFFIFSQAENHVKEMVAERTVLHRVLKELKRMTPAHQITMLKFIKNLSMLSTTLDSLQNSNAIDVLTDLLRSTIKRPHFREVSNQILNTIYNMCRLNKSRQEDAALNGIVPLLQKIVKTERPLKEFALPILCDMAHSGKVGRRELWRNKGLAFYISLLSDPYWQVTALDAIFTWLQEETAKVEEHLLDNRYDKMSFTDSIVRCLTISKANAFENILEPLQKLLRLSPPIASTFARPDLFTRLGQKLHHNKAAVRLNLLRIISSICDSSEEQGGLLAKYGLLEAIRELEHDPAILVRDMAGKLIQSNERSESFSLEKRKPGMRRKSTSTTPPGYLANQSAPATPQINRFNQPKAYFDGRESQRHPRPSLSSSALALRPGSRDGTGPSLSAGLSSSAGPSRNRLSRGVANRLSQVELLAEEETRPSSSLSRRRSILPQRRRPTHADSDWAS.

The span at 1-10 shows a compositional bias: low complexity; the sequence is MVSRSSETSE. Residues 1–46 are disordered; it reads MVSRSSETSEGPPPPSKIPGTPAKTRLSRLNSSPAKQDKPKDDRVV. Residues 36-46 are compositionally biased toward basic and acidic residues; the sequence is KQDKPKDDRVV. Residues 59–309 enclose the Protein kinase domain; that stretch reads YQLGDCLGKG…ARKLLKHPWI (251 aa). Residues 65-73 and Lys-88 contribute to the ATP site; that span reads LGKGAFGSV. Asp-181 serves as the catalytic Proton acceptor. Positions 368 to 402 are disordered; it reads SRYTPTKDILPSPVSKHVTDRFRSPDSTEEDNWDD. Residues 384-393 are compositionally biased toward basic and acidic residues; that stretch reads HVTDRFRSPD. A coiled-coil region spans residues 654–682; that stretch reads AQLEEGLDEVDLEANIARDKYARLRGQVE. Basic and acidic residues predominate over residues 1194 to 1205; that stretch reads ERSESFSLEKRK. Residues 1194 to 1336 are disordered; it reads ERSESFSLEK…PTHADSDWAS (143 aa). A compositionally biased stretch (polar residues) spans 1213-1236; the sequence is TSTTPPGYLANQSAPATPQINRFN. Low complexity-rich tracts occupy residues 1253-1264 and 1272-1285; these read PSLSSSALALRP and PSLSAGLSSSAGPS. Over residues 1315–1327 the composition is skewed to basic residues; the sequence is SRRRSILPQRRRP.

This sequence belongs to the protein kinase superfamily. Ser/Thr protein kinase family. CDC7 subfamily. Mg(2+) is required as a cofactor.

It catalyses the reaction L-seryl-[protein] + ATP = O-phospho-L-seryl-[protein] + ADP + H(+). The catalysed reaction is L-threonyl-[protein] + ATP = O-phospho-L-threonyl-[protein] + ADP + H(+). Functionally, required for early events during cytokinesis including localization of cytoskeletal components to the cytokinetic ring. The chain is Cytokinesis protein sepH from Aspergillus niger (strain ATCC MYA-4892 / CBS 513.88 / FGSC A1513).